The primary structure comprises 253 residues: Light-harvesting complex stress-related protein 1, chloroplastic (253 aa).

The transit peptide at 1 to 39 (MAMMMRKAAAVPASSRRSVAVNSVSGKRTVSGKAGAPVP) directs the protein to the chloroplast. Tyrosine 45 is a binding site for chlorophyll b. Residues phenylalanine 60, glutamate 81, and histidine 84 each contribute to the chlorophyll a site. Arginine 86 is a binding site for chlorophyll b. The helical transmembrane segment at 87–107 (VAMLAALGFIVGEQLQDFPLF) threads the bilayer. Glutamine 124 is a chlorophyll a binding site. Residues 131–151 (EPLLIAIGVAESYRVAVGWAT) form a helical membrane-spanning segment. Residues glutamate 141 and arginine 144 each coordinate chlorophyll b. Residues lysine 190, glutamate 191, asparagine 194, arginine 196, and glutamine 208 each coordinate chlorophyll a. A helical membrane pass occupies residues 197–217 (LAMIAIAAFVAQELVEQTEIF).

It belongs to the light-harvesting chlorophyll a/b-binding (LHC) protein family.

The protein localises to the plastid. It localises to the chloroplast thylakoid membrane. In terms of biological role, required for non-photochemical quenching (NPQ), a mechanism that converts and dissipates the harmful excess absorbed light energy into heat and protect the photosynthetic apparatus from photo-oxidative damage. Is able to sense luminal acidification of the thylakoid membranes, which occurs along with elevated electron flow caused by excess light, and to induce a large, fast, and reversible pH-dependent quenching in LHCII-containing membranes. Mediates excitation energy transfer from light-harvesting complex II (LHCII) to photosystem I (PSI), rather than photosystem II (PSII), at low pH, which mimics the acidified lumen of the thylakoid membranes in high light-exposed chloroplasts. Activates PSI-dependent fluorescence quenching in addition to dissipating excitation energy in LHCII to avoid photooxidative stress under excess light. The polypeptide is Light-harvesting complex stress-related protein 1, chloroplastic (Chlamydomonas reinhardtii (Chlamydomonas smithii)).